A 247-amino-acid polypeptide reads, in one-letter code: 3-deoxy-manno-octulosonate cytidylyltransferase (247 aa).

This sequence belongs to the KdsB family.

The protein localises to the cytoplasm. It carries out the reaction 3-deoxy-alpha-D-manno-oct-2-ulosonate + CTP = CMP-3-deoxy-beta-D-manno-octulosonate + diphosphate. The protein operates within nucleotide-sugar biosynthesis; CMP-3-deoxy-D-manno-octulosonate biosynthesis; CMP-3-deoxy-D-manno-octulosonate from 3-deoxy-D-manno-octulosonate and CTP: step 1/1. Its pathway is bacterial outer membrane biogenesis; lipopolysaccharide biosynthesis. Functionally, activates KDO (a required 8-carbon sugar) for incorporation into bacterial lipopolysaccharide in Gram-negative bacteria. This Methylobacterium sp. (strain 4-46) protein is 3-deoxy-manno-octulosonate cytidylyltransferase.